Here is a 31-residue protein sequence, read N- to C-terminus: Cyclotide mden-J (31 aa).

The segment at residues 1–31 is a cross-link (cyclopeptide (Gly-Asn)); the sequence is GSIPCGESCVYIPCISSIVGCACKSKVCYKN. 3 disulfides stabilise this stretch: cysteine 5-cysteine 21, cysteine 9-cysteine 23, and cysteine 14-cysteine 28.

It belongs to the cyclotide family. Bracelet subfamily. In terms of processing, this is a cyclic peptide.

Functionally, probably participates in a plant defense mechanism. The polypeptide is Cyclotide mden-J (Melicytus dentatus (Tree violet)).